The chain runs to 346 residues: Fructose-1,6-bisphosphatase class 1 (346 aa).

Residues glutamate 96, aspartate 119, leucine 121, and aspartate 122 each coordinate Mg(2+). Substrate contacts are provided by residues 122–125 (DGSS), asparagine 214, tyrosine 247, and lysine 277. Glutamate 283 serves as a coordination point for Mg(2+).

It belongs to the FBPase class 1 family. Homotetramer. It depends on Mg(2+) as a cofactor.

The protein localises to the cytoplasm. It carries out the reaction beta-D-fructose 1,6-bisphosphate + H2O = beta-D-fructose 6-phosphate + phosphate. It participates in carbohydrate biosynthesis; gluconeogenesis. This Cytophaga hutchinsonii (strain ATCC 33406 / DSM 1761 / CIP 103989 / NBRC 15051 / NCIMB 9469 / D465) protein is Fructose-1,6-bisphosphatase class 1.